A 270-amino-acid chain; its full sequence is Regulatory protein RecX (270 aa).

It belongs to the RecX family.

It localises to the cytoplasm. Functionally, modulates RecA activity. The protein is Regulatory protein RecX of Bacillus cereus (strain G9842).